Consider the following 260-residue polypeptide: tRNA pseudouridine synthase B (260 aa).

His44 contacts substrate. The active-site Nucleophile is the Asp49. Positions 77, 180, and 201 each coordinate substrate.

The protein belongs to the pseudouridine synthase TruB family. Type 1 subfamily.

The catalysed reaction is uridine(55) in tRNA = pseudouridine(55) in tRNA. Its function is as follows. Responsible for synthesis of pseudouridine from uracil-55 in the psi GC loop of transfer RNAs. The protein is tRNA pseudouridine synthase B of Blochmanniella pennsylvanica (strain BPEN).